We begin with the raw amino-acid sequence, 286 residues long: Bifunctional protein FolD (286 aa).

NADP(+) contacts are provided by residues 165-167 (GRS), S190, and V231.

The protein belongs to the tetrahydrofolate dehydrogenase/cyclohydrolase family. Homodimer.

It carries out the reaction (6R)-5,10-methylene-5,6,7,8-tetrahydrofolate + NADP(+) = (6R)-5,10-methenyltetrahydrofolate + NADPH. The enzyme catalyses (6R)-5,10-methenyltetrahydrofolate + H2O = (6R)-10-formyltetrahydrofolate + H(+). Its pathway is one-carbon metabolism; tetrahydrofolate interconversion. In terms of biological role, catalyzes the oxidation of 5,10-methylenetetrahydrofolate to 5,10-methenyltetrahydrofolate and then the hydrolysis of 5,10-methenyltetrahydrofolate to 10-formyltetrahydrofolate. The chain is Bifunctional protein FolD from Bacillus cytotoxicus (strain DSM 22905 / CIP 110041 / 391-98 / NVH 391-98).